A 262-amino-acid polypeptide reads, in one-letter code: Vibriobactin-specific 2,3-dihydro-2,3-dihydroxybenzoate dehydrogenase (262 aa).

12-36 (LLVGSARGIGFSVLEHLLQAGAQVM) is an NAD(+) binding site. Serine 145 provides a ligand contact to substrate. The active-site Proton acceptor is tyrosine 158.

Belongs to the short-chain dehydrogenases/reductases (SDR) family.

The enzyme catalyses (2S,3S)-2,3-dihydroxy-2,3-dihydrobenzoate + NAD(+) = 2,3-dihydroxybenzoate + NADH + H(+). It functions in the pathway siderophore biosynthesis; vibriobactin biosynthesis. Involved in an early step of the biosynthesis of the catechol siderophore vibriobactin. Vibriobactin is a chelating compound involved in transporting iron from the bacterial environment into the cell cytoplasm. The sequence is that of Vibriobactin-specific 2,3-dihydro-2,3-dihydroxybenzoate dehydrogenase (vibA) from Vibrio cholerae serotype O1 (strain ATCC 39315 / El Tor Inaba N16961).